Reading from the N-terminus, the 183-residue chain is Isopentenyl-diphosphate Delta-isomerase (183 aa).

Histidine 26 and histidine 33 together coordinate Mn(2+). One can recognise a Nudix hydrolase domain in the interval 31–169 (PLHFAFSCYV…PFAFSPWMVE (139 aa)). The active site involves cysteine 68. Mg(2+) is bound at residue cysteine 68. Histidine 70 lines the Mn(2+) pocket. Mg(2+) is bound at residue glutamate 88. The Mn(2+) site is built by glutamate 118 and glutamate 120. Residue glutamate 120 is part of the active site.

It belongs to the IPP isomerase type 1 family. Requires Mg(2+) as cofactor. It depends on Mn(2+) as a cofactor.

The protein resides in the cytoplasm. The enzyme catalyses isopentenyl diphosphate = dimethylallyl diphosphate. The protein operates within isoprenoid biosynthesis; dimethylallyl diphosphate biosynthesis; dimethylallyl diphosphate from isopentenyl diphosphate: step 1/1. Functionally, catalyzes the 1,3-allylic rearrangement of the homoallylic substrate isopentenyl (IPP) to its highly electrophilic allylic isomer, dimethylallyl diphosphate (DMAPP). This chain is Isopentenyl-diphosphate Delta-isomerase, found in Corynebacterium diphtheriae (strain ATCC 700971 / NCTC 13129 / Biotype gravis).